The chain runs to 609 residues: Arginine--tRNA ligase (609 aa).

The 'HIGH' region signature appears at 132 to 142 (ANPTSSLHVGH).

This sequence belongs to the class-I aminoacyl-tRNA synthetase family. As to quaternary structure, monomer.

Its subcellular location is the cytoplasm. It catalyses the reaction tRNA(Arg) + L-arginine + ATP = L-arginyl-tRNA(Arg) + AMP + diphosphate. The sequence is that of Arginine--tRNA ligase from Psychrobacter sp. (strain PRwf-1).